Here is a 307-residue protein sequence, read N- to C-terminus: D-alanine--D-alanine ligase (307 aa).

Residues 105–304 form the ATP-grasp domain; that stretch reads KMLWKGFGLP…FEQLVVKILE (200 aa). 135–190 lines the ATP pocket; that stretch reads VERLGLPLMVKPSREGSSVGLTKVNAVEELKNAVDLALTHDDTVLIEEWLSGIEMT. Aspartate 258, glutamate 271, and asparagine 273 together coordinate Mg(2+).

Belongs to the D-alanine--D-alanine ligase family. Mg(2+) is required as a cofactor. Mn(2+) serves as cofactor.

The protein resides in the cytoplasm. The catalysed reaction is 2 D-alanine + ATP = D-alanyl-D-alanine + ADP + phosphate + H(+). It participates in cell wall biogenesis; peptidoglycan biosynthesis. Functionally, cell wall formation. The chain is D-alanine--D-alanine ligase from Mannheimia succiniciproducens (strain KCTC 0769BP / MBEL55E).